We begin with the raw amino-acid sequence, 144 residues long: Maximins 2/H8 type 1 (144 aa).

An N-terminal signal peptide occupies residues 1–18 (MNFKYIVAVSFLIASAYA). Positions 19 to 43 (RSEENEIQSLSQRDVLEEESLREMR) are excised as a propeptide. Asparagine amide is present on Asn70. Residues 74–123 (TAEEHEVMKRLETVMRDLDSLDYPEEASERETRGFNQEEIANLFTKKEKR) constitute a propeptide that is removed on maturation. Isoleucine amide is present on Ile143.

It belongs to the bombinin family. Expressed by the skin glands.

The protein resides in the secreted. Its function is as follows. Maximin-2 shows antibacterial activity against both Gram-positive and Gram-negative bacteria. It also shows antimicrobial activity against the fungus C.albicans, but not against A.flavus nor P.uticale. It has little hemolytic activity. Functionally, maximin-H8 shows antimicrobial activity against bacteria and against the fungus C.albicans. Shows strong hemolytic activity. This chain is Maximins 2/H8 type 1, found in Bombina maxima (Giant fire-bellied toad).